Reading from the N-terminus, the 211-residue chain is Protein-L-isoaspartate O-methyltransferase 2 (211 aa).

The active site involves Ser-60.

Belongs to the methyltransferase superfamily. L-isoaspartyl/D-aspartyl protein methyltransferase family.

It is found in the cytoplasm. The catalysed reaction is [protein]-L-isoaspartate + S-adenosyl-L-methionine = [protein]-L-isoaspartate alpha-methyl ester + S-adenosyl-L-homocysteine. Catalyzes the methyl esterification of L-isoaspartyl residues in peptides and proteins that result from spontaneous decomposition of normal L-aspartyl and L-asparaginyl residues. It plays a role in the repair and/or degradation of damaged proteins. The polypeptide is Protein-L-isoaspartate O-methyltransferase 2 (Nitrosospira multiformis (strain ATCC 25196 / NCIMB 11849 / C 71)).